A 232-amino-acid chain; its full sequence is MEPAVERKVPEQEEQLQPSHARAEDAPPAAVEEEDEAEAEESERRNRELKAGLHPLRRKLVLWYTRRTPGTRSQSYEDNIKKIVDFSTVESFWVCYCHLARPSSLPSPTDLHLFKEGVRPLWEDPANRNGGKWIIRFKKAVSGRFWEDLVLVLVGDQLDYSDDVCGIVLSCRFNEDILSVWNRNASDHQAVMTLRDSIKRHLKLPHTYLMEYKPHDASLRDNSSYRNTWLRG.

Basic and acidic residues predominate over residues 1–11 (MEPAVERKVPE). Positions 1 to 49 (MEPAVERKVPEQEEQLQPSHARAEDAPPAAVEEEDEAEAEESERRNREL) are disordered. Residues 31 to 41 (VEEEDEAEAEE) show a composition bias toward acidic residues.

Belongs to the eukaryotic initiation factor 4E family. In terms of assembly, EIF4F is a multi-subunit complex, the composition of which varies with external and internal environmental conditions. It is composed of at least EIF4A, EIF4E and EIF4G. EIF4E is also known to interact with other partners. In higher plants two isoforms of EIF4F have been identified, named isoform EIF4F and isoform EIF(iso)4F. Isoform EIF4F has subunits p220 and p26, whereas isoform EIF(iso)4F has subunits p82 and p28.

In terms of biological role, recognizes and binds the 7-methylguanosine-containing mRNA cap during an early step in the initiation of protein synthesis and facilitates ribosome binding by inducing the unwinding of the mRNAs secondary structures. The sequence is that of Eukaryotic translation initiation factor NCBP (NCBP) from Triticum aestivum (Wheat).